A 349-amino-acid chain; its full sequence is Anthranilate phosphoribosyltransferase (349 aa).

Residues Gly82, 85-86, 92-95, 110-118, and Ser122 each bind 5-phospho-alpha-D-ribose 1-diphosphate; these read GD, NVST, and KHGNRAVSG. Gly82 is a binding site for anthranilate. A Mg(2+)-binding site is contributed by Ser94. An anthranilate-binding site is contributed by Asn113. Arg168 contacts anthranilate. Residues Asp227 and Glu228 each coordinate Mg(2+).

The protein belongs to the anthranilate phosphoribosyltransferase family. In terms of assembly, homodimer. The cofactor is Mg(2+).

It catalyses the reaction N-(5-phospho-beta-D-ribosyl)anthranilate + diphosphate = 5-phospho-alpha-D-ribose 1-diphosphate + anthranilate. It participates in amino-acid biosynthesis; L-tryptophan biosynthesis; L-tryptophan from chorismate: step 2/5. Catalyzes the transfer of the phosphoribosyl group of 5-phosphorylribose-1-pyrophosphate (PRPP) to anthranilate to yield N-(5'-phosphoribosyl)-anthranilate (PRA). This chain is Anthranilate phosphoribosyltransferase, found in Pseudomonas syringae pv. tomato (strain ATCC BAA-871 / DC3000).